The following is a 268-amino-acid chain: Tryptophan synthase alpha chain (268 aa).

Residues glutamate 49 and aspartate 60 each act as proton acceptor in the active site.

Belongs to the TrpA family. In terms of assembly, tetramer of two alpha and two beta chains.

It catalyses the reaction (1S,2R)-1-C-(indol-3-yl)glycerol 3-phosphate + L-serine = D-glyceraldehyde 3-phosphate + L-tryptophan + H2O. It participates in amino-acid biosynthesis; L-tryptophan biosynthesis; L-tryptophan from chorismate: step 5/5. Functionally, the alpha subunit is responsible for the aldol cleavage of indoleglycerol phosphate to indole and glyceraldehyde 3-phosphate. In Pseudomonas aeruginosa (strain ATCC 15692 / DSM 22644 / CIP 104116 / JCM 14847 / LMG 12228 / 1C / PRS 101 / PAO1), this protein is Tryptophan synthase alpha chain.